Consider the following 299-residue polypeptide: tRNA dimethylallyltransferase (299 aa).

Position 13 to 20 (13 to 20) interacts with ATP; sequence GPTASGKT. 15-20 lines the substrate pocket; sequence TASGKT. Residues 38-41 form an interaction with substrate tRNA region; it reads DSRQ.

The protein belongs to the IPP transferase family. Monomer. Mg(2+) serves as cofactor.

The enzyme catalyses adenosine(37) in tRNA + dimethylallyl diphosphate = N(6)-dimethylallyladenosine(37) in tRNA + diphosphate. Functionally, catalyzes the transfer of a dimethylallyl group onto the adenine at position 37 in tRNAs that read codons beginning with uridine, leading to the formation of N6-(dimethylallyl)adenosine (i(6)A). This chain is tRNA dimethylallyltransferase, found in Prochlorococcus marinus (strain NATL2A).